Here is a 446-residue protein sequence, read N- to C-terminus: N-succinylarginine dihydrolase (446 aa).

Substrate is bound by residues 19 to 28 (AGLSYGNVAS), Asn-110, and 137 to 138 (HR). Glu-174 is a catalytic residue. A substrate-binding site is contributed by Arg-214. Residue His-250 is part of the active site. The substrate site is built by Asp-252 and Asn-363. Cys-369 acts as the Nucleophile in catalysis.

It belongs to the succinylarginine dihydrolase family. As to quaternary structure, homodimer.

The enzyme catalyses N(2)-succinyl-L-arginine + 2 H2O + 2 H(+) = N(2)-succinyl-L-ornithine + 2 NH4(+) + CO2. The protein operates within amino-acid degradation; L-arginine degradation via AST pathway; L-glutamate and succinate from L-arginine: step 2/5. In terms of biological role, catalyzes the hydrolysis of N(2)-succinylarginine into N(2)-succinylornithine, ammonia and CO(2). This Pseudoalteromonas atlantica (strain T6c / ATCC BAA-1087) protein is N-succinylarginine dihydrolase.